A 389-amino-acid chain; its full sequence is Succinate--CoA ligase [ADP-forming] subunit beta (389 aa).

The ATP-grasp domain maps to Arg-9–Lys-236. ATP is bound by residues Lys-45, Gly-52 to Gly-54, Ala-94, and Glu-99. The Mg(2+) site is built by Asn-191 and Asp-205. Substrate-binding positions include Asn-256 and Gly-318–Thr-320.

Belongs to the succinate/malate CoA ligase beta subunit family. Heterotetramer of two alpha and two beta subunits. Mg(2+) is required as a cofactor.

It carries out the reaction succinate + ATP + CoA = succinyl-CoA + ADP + phosphate. It catalyses the reaction GTP + succinate + CoA = succinyl-CoA + GDP + phosphate. It participates in carbohydrate metabolism; tricarboxylic acid cycle; succinate from succinyl-CoA (ligase route): step 1/1. Functionally, succinyl-CoA synthetase functions in the citric acid cycle (TCA), coupling the hydrolysis of succinyl-CoA to the synthesis of either ATP or GTP and thus represents the only step of substrate-level phosphorylation in the TCA. The beta subunit provides nucleotide specificity of the enzyme and binds the substrate succinate, while the binding sites for coenzyme A and phosphate are found in the alpha subunit. The sequence is that of Succinate--CoA ligase [ADP-forming] subunit beta from Renibacterium salmoninarum (strain ATCC 33209 / DSM 20767 / JCM 11484 / NBRC 15589 / NCIMB 2235).